Here is a 557-residue protein sequence, read N- to C-terminus: Alpha-barbatene synthase (557 aa).

5 residues coordinate (2E,6E)-farnesyl diphosphate: Arg-273, Asp-310, Asp-314, Arg-451, and Asp-454. Mg(2+)-binding residues include Asp-310 and Asp-314. The short motif at 310–314 is the DDXXD motif element; that stretch reads DDACD. Mg(2+) is bound by residues Asp-454, Asp-455, and Asp-462.

The protein belongs to the terpene synthase family. Tpsa subfamily. In terms of assembly, monomer. Mg(2+) is required as a cofactor. The cofactor is Mn(2+). As to expression, expressed exclusively in flowers. Expressed in intrafloral nectaries and in the funiculus within the ovules.

The protein resides in the cytoplasm. The enzyme catalyses (2E,6E)-farnesyl diphosphate = (+)-alpha-barbatene + diphosphate. It catalyses the reaction (2E,6E)-farnesyl diphosphate = (+)-thujopsene + diphosphate. It carries out the reaction (2E,6E)-farnesyl diphosphate = (+)-beta-chamigrene + diphosphate. The catalysed reaction is (2E,6E)-farnesyl diphosphate = (+)-beta-barbatene + diphosphate. The enzyme catalyses (2E,6E)-farnesyl diphosphate = beta-sesquiphellandrene + diphosphate. It catalyses the reaction (2E,6E)-farnesyl diphosphate = (S)-beta-bisabolene + diphosphate. It carries out the reaction (2E,6E)-farnesyl diphosphate = (-)-alpha-cuprenene + diphosphate. The catalysed reaction is (2E,6E)-farnesyl diphosphate = alpha-zingiberene + diphosphate. The enzyme catalyses (2E,6E)-farnesyl diphosphate = beta-acoradiene + diphosphate. It catalyses the reaction (2E,6E)-farnesyl diphosphate = (E)-beta-farnesene + diphosphate. It functions in the pathway secondary metabolite biosynthesis; terpenoid biosynthesis. In terms of biological role, involved in the biosynthesis of over 15 sesquiterpenes (C15). The major products are (+)-alpha-barbatene (27.3%), (+)-thujopsene (17.8%) and (+)-beta-chamigrene (9.9%). Can use farnesyl diphosphate or geranyl diphosphate as substrates, but not geranylgeranyl diphosphate. The sequence is that of Alpha-barbatene synthase from Arabidopsis thaliana (Mouse-ear cress).